The primary structure comprises 170 residues: Translationally-controlled tumor protein homolog (170 aa).

The 170-residue stretch at 1–170 (MLIYSDIITG…WKHGLKETKV (170 aa)) folds into the TCTP domain.

The protein belongs to the TCTP family.

It localises to the cytoplasm. The protein localises to the cytoskeleton. Involved in protein synthesis. Involved in microtubule stabilization. This Neurospora crassa (strain ATCC 24698 / 74-OR23-1A / CBS 708.71 / DSM 1257 / FGSC 987) protein is Translationally-controlled tumor protein homolog.